A 240-amino-acid chain; its full sequence is Uridylate kinase (240 aa).

Residues 15–18 (KISG), Gly-58, and Arg-62 contribute to the ATP site. Residues Asp-77 and 138–145 (TGNPLFTT) each bind UMP. Residues Thr-165, Tyr-171, and Asp-174 each coordinate ATP.

The protein belongs to the UMP kinase family. As to quaternary structure, homohexamer.

The protein localises to the cytoplasm. It catalyses the reaction UMP + ATP = UDP + ADP. It participates in pyrimidine metabolism; CTP biosynthesis via de novo pathway; UDP from UMP (UMPK route): step 1/1. Inhibited by UTP. Functionally, catalyzes the reversible phosphorylation of UMP to UDP. This is Uridylate kinase from Buchnera aphidicola subsp. Schizaphis graminum (strain Sg).